A 457-amino-acid chain; its full sequence is L-asparaginase-like protein GA18140 (457 aa).

The N-terminal stretch at 1–20 is a signal peptide; the sequence is MRYLCRAQLLSLLLLPLLKA. Disulfide bonds link cysteine 72–cysteine 78, cysteine 172–cysteine 188, and cysteine 327–cysteine 354.

The protein belongs to the Ntn-hydrolase family.

The protein is L-asparaginase-like protein GA18140 of Drosophila pseudoobscura pseudoobscura (Fruit fly).